Reading from the N-terminus, the 249-residue chain is 3-deoxy-D-manno-octulosonic acid kinase (249 aa).

Residue Asp175 is part of the active site.

This sequence belongs to the protein kinase superfamily. KdkA/RfaP family.

The protein localises to the cell inner membrane. The catalysed reaction is an alpha-Kdo-(2-&gt;6)-lipid IVA + ATP = a 4-O-phospho-alpha-Kdo-(2-&gt;6)-lipid IVA + ADP + H(+). The protein operates within bacterial outer membrane biogenesis; LPS core biosynthesis. In terms of biological role, catalyzes the ATP-dependent phosphorylation of the 3-deoxy-D-manno-octulosonic acid (Kdo) residue in Kdo-lipid IV(A) at the 4-OH position. This chain is 3-deoxy-D-manno-octulosonic acid kinase, found in Xylella fastidiosa (strain M12).